Reading from the N-terminus, the 490-residue chain is GTPase Der (490 aa).

2 consecutive EngA-type G domains span residues proline 3 to valine 166 and isoleucine 203 to threonine 376. Residues glycine 9–serine 16, aspartate 56–isoleucine 60, asparagine 118–aspartate 121, glycine 209–serine 216, aspartate 256–valine 260, and asparagine 321–aspartate 324 contribute to the GTP site. In terms of domain architecture, KH-like spans arginine 377 to glutamate 461.

This sequence belongs to the TRAFAC class TrmE-Era-EngA-EngB-Septin-like GTPase superfamily. EngA (Der) GTPase family. As to quaternary structure, associates with the 50S ribosomal subunit.

GTPase that plays an essential role in the late steps of ribosome biogenesis. The sequence is that of GTPase Der from Salmonella gallinarum (strain 287/91 / NCTC 13346).